A 54-amino-acid polypeptide reads, in one-letter code: Large ribosomal subunit protein bL33 (54 aa).

Belongs to the bacterial ribosomal protein bL33 family.

The sequence is that of Large ribosomal subunit protein bL33 from Roseiflexus castenholzii (strain DSM 13941 / HLO8).